Consider the following 423-residue polypeptide: Imidazolonepropionase (423 aa).

Positions 78 and 80 each coordinate Fe(3+). 2 residues coordinate Zn(2+): histidine 78 and histidine 80. Positions 87, 150, and 183 each coordinate 4-imidazolone-5-propanoate. Residue tyrosine 150 participates in N-formimidoyl-L-glutamate binding. Histidine 247 contacts Fe(3+). Residue histidine 247 participates in Zn(2+) binding. 4-imidazolone-5-propanoate is bound at residue glutamate 250. A Fe(3+)-binding site is contributed by aspartate 322. Aspartate 322 contributes to the Zn(2+) binding site. Positions 324 and 326 each coordinate N-formimidoyl-L-glutamate. Serine 327 contacts 4-imidazolone-5-propanoate.

The protein belongs to the metallo-dependent hydrolases superfamily. HutI family. It depends on Zn(2+) as a cofactor. The cofactor is Fe(3+).

The protein resides in the cytoplasm. The enzyme catalyses 4-imidazolone-5-propanoate + H2O = N-formimidoyl-L-glutamate. It participates in amino-acid degradation; L-histidine degradation into L-glutamate; N-formimidoyl-L-glutamate from L-histidine: step 3/3. Its function is as follows. Catalyzes the hydrolytic cleavage of the carbon-nitrogen bond in imidazolone-5-propanoate to yield N-formimidoyl-L-glutamate. It is the third step in the universal histidine degradation pathway. This chain is Imidazolonepropionase, found in Bacillus thuringiensis (strain Al Hakam).